We begin with the raw amino-acid sequence, 475 residues long: Probable dolichyl pyrophosphate Man9GlcNAc2 alpha-1,3-glucosyltransferase (475 aa).

The next 8 membrane-spanning stretches (helical) occupy residues 114 to 133, 161 to 181, 235 to 255, 296 to 316, 322 to 342, 385 to 405, 418 to 438, and 441 to 461; these read VVSA…AYSL, GHFQ…AAIL, AVVL…LQAV, MALV…VLLF, VGFL…SFQV, LLVP…CFDS, IANI…TVPA, and KYPD…FFLF.

Belongs to the ALG6/ALG8 glucosyltransferase family.

The protein resides in the endoplasmic reticulum membrane. The catalysed reaction is an alpha-D-Man-(1-&gt;2)-alpha-D-Man-(1-&gt;2)-alpha-D-Man-(1-&gt;3)-[alpha-D-Man-(1-&gt;2)-alpha-D-Man-(1-&gt;3)-[alpha-D-Man-(1-&gt;2)-alpha-D-Man-(1-&gt;6)]-alpha-D-Man-(1-&gt;6)]-beta-D-Man-(1-&gt;4)-beta-D-GlcNAc-(1-&gt;4)-alpha-D-GlcNAc-diphospho-di-trans,poly-cis-dolichol + a di-trans,poly-cis-dolichyl beta-D-glucosyl phosphate = an alpha-D-Glc-(1-&gt;3)-alpha-D-Man-(1-&gt;2)-alpha-D-Man-(1-&gt;2)-alpha-D-Man-(1-&gt;3)-[alpha-D-Man-(1-&gt;2)-alpha-D-Man-(1-&gt;3)-[alpha-D-Man-(1-&gt;2)-alpha-D-Man-(1-&gt;6)]-alpha-D-Man-(1-&gt;6)]-beta-D-Man-(1-&gt;4)-beta-D-GlcNAc-(1-&gt;4)-alpha-D-GlcNAc-diphospho-di-trans,poly-cis-dolichol + a di-trans,poly-cis-dolichyl phosphate + H(+). The protein operates within protein modification; protein glycosylation. Functionally, adds the first glucose residue to the lipid-linked oligosaccharide precursor for N-linked glycosylation. Transfers glucose from dolichyl phosphate glucose (Dol-P-Glc) onto the lipid-linked oligosaccharide Man(9)GlcNAc(2)-PP-Dol. Involved in cuticle differentiation. This is Probable dolichyl pyrophosphate Man9GlcNAc2 alpha-1,3-glucosyltransferase (gny) from Drosophila melanogaster (Fruit fly).